The sequence spans 316 residues: Beta-ketoacyl-[acyl-carrier-protein] synthase III (316 aa).

Residues Cys-112 and His-243 contribute to the active site. An ACP-binding region spans residues 244-248; that stretch reads QANLR. The active site involves Asn-273.

Belongs to the thiolase-like superfamily. FabH family. Homodimer.

It is found in the cytoplasm. The catalysed reaction is malonyl-[ACP] + acetyl-CoA + H(+) = 3-oxobutanoyl-[ACP] + CO2 + CoA. It participates in lipid metabolism; fatty acid biosynthesis. Catalyzes the condensation reaction of fatty acid synthesis by the addition to an acyl acceptor of two carbons from malonyl-ACP. Catalyzes the first condensation reaction which initiates fatty acid synthesis and may therefore play a role in governing the total rate of fatty acid production. Possesses both acetoacetyl-ACP synthase and acetyl transacylase activities. Its substrate specificity determines the biosynthesis of branched-chain and/or straight-chain of fatty acids. The protein is Beta-ketoacyl-[acyl-carrier-protein] synthase III of Actinobacillus succinogenes (strain ATCC 55618 / DSM 22257 / CCUG 43843 / 130Z).